Here is a 2363-residue protein sequence, read N- to C-terminus: Spectrin beta chain, non-erythrocytic 1 (2363 aa).

The residue at position 2 (Thr-2) is an N-acetylthreonine. The interval 2–275 is actin-binding; the sequence is TTTVATDYDN…IITYVVTYYH (274 aa). Phosphoserine is present on residues Ile-14 and Ser-36. 2 Calponin-homology (CH) domains span residues 54-158 and 173-278; these read AVQK…LRFQ and KSAK…HYFS. An N6-acetyllysine modification is found at Lys-90. Ser-228 carries the phosphoserine modification. Spectrin repeat units lie at residues 303–411, 423–525, 530–636, 639–742, 745–847, 850–952, 957–1060, 1063–1166, 1170–1259, 1276–1376, 1381–1482, 1486–1590, 1592–1696, 1698–1801, and 1805–1907; these read MIEK…LALR, LARR…QRLE, LQKI…RLEE, RLWK…RLEE, LLHQ…ALQD, ALYK…DALL, IQNY…SLGE, KLQQ…NLLS, AYQQ…RHRK, DLQK…AQRL, KAEL…HNLL, EIHQ…RLEE, HKAQ…KLDE, HRLF…TQIL, and YELH…RVRL. 6 positions are modified to phosphoserine: Ser-817, Ser-903, Ser-1057, Ser-1076, Ser-1079, and Ser-1237. Phosphoserine occurs at positions 1388, 1447, and 1557. Positions 1563–2093 are interaction with ANK2; the sequence is IRQRLADLKQ…LLEVRRQQEE (531 aa). The residue at position 1805 (Tyr-1805) is a Phosphotyrosine. 3 positions are modified to N6-acetyllysine: Lys-1815, Lys-1913, and Lys-1989. Spectrin repeat units follow at residues 1914–2014 and 2018–2097; these read FRFF…EWLR and EVHQ…EERK. The tract at residues 2089–2193 is disordered; the sequence is RQQEEEERKR…AATLPARTLE (105 aa). Phosphoserine is present on residues Ser-2102, Ser-2127, and Ser-2137. Over residues 2115-2130 the composition is skewed to polar residues; the sequence is SQQWDTSKGDQVSQNG. Residue Thr-2146 is modified to Phosphothreonine. Ser-2147 is modified (phosphoserine). The mediates interaction with CAMSAP1 stretch occupies residues 2148 to 2176; sequence EMVNGAAEQRTSSKESSPVPSPTLDRKAK. Phosphothreonine is present on Thr-2158. Phosphoserine occurs at positions 2159, 2160, 2163, 2164, and 2168. The residue at position 2170 (Thr-2170) is a Phosphothreonine. Residue Ser-2183 is modified to Phosphoserine. Residues Thr-2186 and Thr-2194 each carry the phosphothreonine modification. The 111-residue stretch at 2196–2306 folds into the PH domain; sequence AAQMEGFLNR…WIQAISSAIS (111 aa). Residues 2308–2363 form a disordered region; it reads DKHDTSASTQSTPASSRAQTLPTSVVTITSESSPGKREKDKEKDKEKRFSLFGKKK. Residues Ser-2313 and Ser-2318 each carry the phosphoserine modification. Over residues 2313-2327 the composition is skewed to low complexity; the sequence is SASTQSTPASSRAQT. Thr-2319 is modified (phosphothreonine). The O-linked (GlcNAc) serine glycan is linked to Ser-2323. Position 2327 is a phosphothreonine (Thr-2327). Positions 2328–2340 are enriched in polar residues; sequence LPTSVVTITSESS. Ser-2339 and Ser-2340 each carry phosphoserine. Over residues 2341 to 2356 the composition is skewed to basic and acidic residues; that stretch reads PGKREKDKEKDKEKRF.

Belongs to the spectrin family. As to quaternary structure, interacts with ANK2. Interacts with CPNE4 (via VWFA domain). Like erythrocyte spectrin, the spectrin-like proteins are capable to form dimers which can further associate to tetramers. Interacts with CAMSAP1. Can form heterodimers with SPTAN1. Isoform 2 is present in brain, heart, kidney and liver (at protein level).

The protein resides in the cytoplasm. It localises to the cytoskeleton. The protein localises to the endomembrane system. It is found in the myofibril. Its subcellular location is the sarcomere. The protein resides in the m line. It localises to the cytosol. The protein localises to the cell membrane. Fodrin, which seems to be involved in secretion, interacts with calmodulin in a calcium-dependent manner and is thus candidate for the calcium-dependent movement of the cytoskeleton at the membrane. Plays a critical role in central nervous system development and function. This is Spectrin beta chain, non-erythrocytic 1 (Sptbn1) from Mus musculus (Mouse).